A 51-amino-acid polypeptide reads, in one-letter code: Small polypeptide DEVIL 1 (51 aa).

The segment at 1–25 (MEMKRVMMSSAERSKEKKRSISRRL) is disordered. Residues 16 to 25 (EKKRSISRRL) are compositionally biased toward basic residues. A required for DVL/RTFL small polypeptide activity region spans residues 20–51 (SISRRLGKYMKEQKGRIYIIRRCMVMLLCSHD). A helical membrane pass occupies residues 28 to 44 (YMKEQKGRIYIIRRCMV).

The protein belongs to the DVL/RTFL small polypeptides family. In terms of tissue distribution, mostly expressed in leaves and, to a lower extent, in roots and stems.

It localises to the cell membrane. Small polypeptide acting as a regulatory molecule which coordinates cellular responses required for differentiation, growth and development, including leaves shape, pedicule elongation, inflorescence organization and fruit maturation, probably by restricting polar cell proliferation in lateral organs and coordinating socket cell recruitment and differentiation at trichome sites. The protein is Small polypeptide DEVIL 1 of Arabidopsis thaliana (Mouse-ear cress).